Reading from the N-terminus, the 262-residue chain is Alpha-tubulin N-acetyltransferase 1 (262 aa).

The region spanning 1–177 is the N-acetyltransferase domain; sequence MQVDADLRPI…TNFVVFEELF (177 aa). 111 to 124 lines the acetyl-CoA pocket; sequence FYVHFSCQRQGVGQ.

Belongs to the acetyltransferase ATAT1 family. In terms of tissue distribution, expressed solely in touch receptor neurons.

The catalysed reaction is L-lysyl-[alpha-tubulin] + acetyl-CoA = N(6)-acetyl-L-lysyl-[alpha-tubulin] + CoA + H(+). Functionally, specifically acetylates 'Lys-40' in alpha-tubulin/mec-12 on the lumenal side of microtubules. Promotes microtubule destabilization and accelerates microtubule dynamics; this activity may be independent of acetylation activity. Acetylates alpha-tubulin with a slow enzymatic rate, due to a catalytic site that is not optimized for acetyl transfer. Enters the microtubule through each end and diffuses quickly throughout the lumen of microtubules. Acetylates only long/old microtubules because of its slow acetylation rate since it does not have time to act on dynamically unstable microtubules before the enzyme is released. Required for the maintenance of touch receptor neurons and possibly other type of neurons involved in locomotion. Regulates the number and localization of mitochondria in mechanosensory neurons. Plays a role in axonal transport. This is Alpha-tubulin N-acetyltransferase 1 from Caenorhabditis elegans.